A 958-amino-acid chain; its full sequence is MQSKSIKIQGARTHNLKDIDIDIPKNKLVVLTGLSGSGKSSLAFDTIYAEGQRRYVESLSSYARQFLGQMDKPDVDVIEGLSPAISIDQKTTSKNPRSTVGTVTEIYDYLRLLYARVGRPTCPNHGIEISSQTVQQMVDRILEYPERTKLQILAPVVSGRKGEHVKILENLKQEGYVRIRVDNEMREVTDDIQLEKNKKHSIEVVIDRIVVKDGVASRLSDSIETALKLGEGNIIVDVIGEEELTFSENHACPICGFSIGELEPRLFSFNSPFGACPSCDGLGTKLEVDIDLVIPDWEKTLNENAIAPWEPISSQYYPQLLKSVCNHFGIDMDIPVKEIPQQQMDIILQGSGKEKIKFEYENDFGSIRRSEAPFEGVLKNVARRYRETSSDFIRETLEKYMAQKNCPTCKGHRLKKEALAVLINGKHISNVTDYSIVESIQLFQQLDLTEKEQQIARLILKEIDNRLEFLNNVGLDYLTLSRTAGTLSGGEAQRIRLATQIGSALTGVLYVLDEPSIGLHQRDNDRLIDTLKRMRDLDNTLIVVEHDEDTMLAADWLVDIGPGAGEHGGEIVASDTPQNVMKNEQSLTGKYLSGKEFIPLPTKRRKPNKRKIEVMGASENNLKNVSAKIPIGLMTVVTGVSGSGKSTLVNEIVYKSLAKSLYKGKVKPGKHKKIKGIEHIDKVIDIDQSPIGRTPRSNPATYTGVFDDIRDVFAQTNEAKVRGYKKGRFSFNVKGGRCEACRGDGILKIEMHFLPDVYVPCEVCHGARYNRETLEVKYKGKNISEVLELRIEEALEFFSAIPKIKRKLQTVYDVGLGYIRLGQPATTLSGGEAQRVKLASELHKRSTGKSFYILDEPTTGLHVDDIRRLLSVLQRIADNGDSVLIIEHNLDVIKSADHIIDLGPEGGDRGGQIIATGTPEQIAEQQDVSYTGKYLSPVLDRDKQRMEETLEAKTVSRS.

Positions 1–232 constitute an ABC transporter 1 domain; it reads MQSKSIKIQG…IETALKLGEG (232 aa). 33–40 provides a ligand contact to ATP; that stretch reads GLSGSGKS. A C4-type zinc finger spans residues 252–279; sequence CPICGFSIGELEPRLFSFNSPFGACPSC. ABC transporter domains are found at residues 315-593 and 604-935; these read QYYP…KYLS and RRKP…GKYL. 639 to 646 provides a ligand contact to ATP; sequence GVSGSGKS. The segment at 738–764 adopts a C4-type zinc-finger fold; it reads CEACRGDGILKIEMHFLPDVYVPCEVC.

Belongs to the ABC transporter superfamily. UvrA family. In terms of assembly, forms a heterotetramer with UvrB during the search for lesions.

Its subcellular location is the cytoplasm. In terms of biological role, the UvrABC repair system catalyzes the recognition and processing of DNA lesions. UvrA is an ATPase and a DNA-binding protein. A damage recognition complex composed of 2 UvrA and 2 UvrB subunits scans DNA for abnormalities. When the presence of a lesion has been verified by UvrB, the UvrA molecules dissociate. This Oceanobacillus iheyensis (strain DSM 14371 / CIP 107618 / JCM 11309 / KCTC 3954 / HTE831) protein is UvrABC system protein A.